A 481-amino-acid polypeptide reads, in one-letter code: Aspartyl/glutamyl-tRNA(Asn/Gln) amidotransferase subunit B (481 aa).

It belongs to the GatB/GatE family. GatB subfamily. In terms of assembly, heterotrimer of A, B and C subunits.

The catalysed reaction is L-glutamyl-tRNA(Gln) + L-glutamine + ATP + H2O = L-glutaminyl-tRNA(Gln) + L-glutamate + ADP + phosphate + H(+). The enzyme catalyses L-aspartyl-tRNA(Asn) + L-glutamine + ATP + H2O = L-asparaginyl-tRNA(Asn) + L-glutamate + ADP + phosphate + 2 H(+). In terms of biological role, allows the formation of correctly charged Asn-tRNA(Asn) or Gln-tRNA(Gln) through the transamidation of misacylated Asp-tRNA(Asn) or Glu-tRNA(Gln) in organisms which lack either or both of asparaginyl-tRNA or glutaminyl-tRNA synthetases. The reaction takes place in the presence of glutamine and ATP through an activated phospho-Asp-tRNA(Asn) or phospho-Glu-tRNA(Gln). In Carboxydothermus hydrogenoformans (strain ATCC BAA-161 / DSM 6008 / Z-2901), this protein is Aspartyl/glutamyl-tRNA(Asn/Gln) amidotransferase subunit B.